A 675-amino-acid chain; its full sequence is Probable potassium transport system protein Kup (675 aa).

A compositionally biased stretch (basic and acidic residues) spans 1 to 12 (MEPAMPEHDGDH). The interval 1–25 (MEPAMPEHDGDHASNPPHGVGIPND) is disordered. Helical transmembrane passes span 62–82 (ALLA…LYAL), 104–124 (LASL…VILI), 153–173 (WLFG…SIIT), 195–215 (IIIP…VLGT), 222–242 (FGPI…KGIF), 255–275 (FALE…GSVV), 300–320 (WLFF…ALLI), 332–352 (LLVP…ATVI), 390–410 (IYLP…VLAF), 419–439 (AYGI…MVVF), 450–470 (VAIV…ANVL), and 472–492 (IPDG…IMTT).

Belongs to the HAK/KUP transporter (TC 2.A.72) family.

The protein localises to the cell inner membrane. The catalysed reaction is K(+)(in) + H(+)(in) = K(+)(out) + H(+)(out). Transport of potassium into the cell. Likely operates as a K(+):H(+) symporter. This is Probable potassium transport system protein Kup from Gluconobacter oxydans (strain 621H) (Gluconobacter suboxydans).